The sequence spans 516 residues: Leucine-rich repeat transmembrane neuronal protein 2 (516 aa).

The first 33 residues, 1–33, serve as a signal peptide directing secretion; the sequence is MGLHFKWPLGAPMLAAIYAMSMVLKMLPALGMA. The LRRNT domain occupies 34 to 61; it reads CPPKCRCEKLLFYCDSQGFHSVPNATDK. Residues 34–422 are Extracellular-facing; that stretch reads CPPKCRCEKL…EPDNAIFTQR (389 aa). N-linked (GlcNAc...) asparagine glycosylation is present at Asn57. LRR repeat units lie at residues 63–83, 86–107, 110–131, 134–155, 158–179, 182–203, 206–227, 230–251, 254–275, and 278–299; these read SLGL…QFAS, QLTW…AFQG, KLKE…TFTQ, NLQN…LFYG, KLQT…LFWD, SLEF…GFAG, KLRE…HFLR, SLHT…MEWT, TLEK…VFET, and NLKI…ILNS. Asn126 carries N-linked (GlcNAc...) asparagine glycosylation. Asn243 carries an N-linked (GlcNAc...) asparagine glycan. An LRRCT domain is found at 311-362; the sequence is NLWECSARICALASWLGSFQGRWEHSILCHSPDHTQGEDILDAVHGFQLCWN. Asn362 carries N-linked (GlcNAc...) asparagine glycosylation. The chain crosses the membrane as a helical span at residues 423–443; sequence VITGTMALLFSFFFIIFIVFI. The Cytoplasmic segment spans residues 444 to 516; it reads SRKCCPPTLR…QQLPYKECEV (73 aa). Positions 513–516 match the Involved in DLG4-binding motif; that stretch reads ECEV.

Belongs to the LRRTM family. Interacts with DLG4. Interacts with neurexin NRXN1; interaction is mediated by heparan sulfate glycan modification on neurexin. Expressed in neuronal tissues.

It localises to the cell membrane. Its subcellular location is the postsynaptic cell membrane. Involved in the development and maintenance of excitatory synapses in the vertebrate nervous system. Regulates surface expression of AMPA receptors and instructs the development of functional glutamate release sites. Acts as a ligand for the presynaptic receptors NRXN1-A and NRXN1-B. In Homo sapiens (Human), this protein is Leucine-rich repeat transmembrane neuronal protein 2 (LRRTM2).